Reading from the N-terminus, the 130-residue chain is Putative pre-16S rRNA nuclease (130 aa).

It belongs to the YqgF nuclease family.

It is found in the cytoplasm. In terms of biological role, could be a nuclease involved in processing of the 5'-end of pre-16S rRNA. The chain is Putative pre-16S rRNA nuclease from Buchnera aphidicola subsp. Cinara cedri (strain Cc).